Consider the following 95-residue polypeptide: ESAT-6-like protein EsxC (95 aa).

Belongs to the WXG100 family. ESAT-6 subfamily.

It localises to the secreted. In Mycolicibacterium paratuberculosis (strain ATCC BAA-968 / K-10) (Mycobacterium paratuberculosis), this protein is ESAT-6-like protein EsxC.